The sequence spans 179 residues: Protein GrpE (179 aa).

Residues 1–20 (MSEETKEEIKNEKVDEEVTE) form a disordered region.

This sequence belongs to the GrpE family. In terms of assembly, homodimer.

Its subcellular location is the cytoplasm. In terms of biological role, participates actively in the response to hyperosmotic and heat shock by preventing the aggregation of stress-denatured proteins, in association with DnaK and GrpE. It is the nucleotide exchange factor for DnaK and may function as a thermosensor. Unfolded proteins bind initially to DnaJ; upon interaction with the DnaJ-bound protein, DnaK hydrolyzes its bound ATP, resulting in the formation of a stable complex. GrpE releases ADP from DnaK; ATP binding to DnaK triggers the release of the substrate protein, thus completing the reaction cycle. Several rounds of ATP-dependent interactions between DnaJ, DnaK and GrpE are required for fully efficient folding. The polypeptide is Protein GrpE (Lactococcus lactis subsp. cremoris (strain MG1363)).